Reading from the N-terminus, the 139-residue chain is Acidic phospholipase A2 BpPLA2-TXI (139 aa).

Positions 1–16 (MRTLWIMAVLLVGVEG) are cleaved as a signal peptide. The cysteines at positions 44 and 60 are disulfide-linked. The Ca(2+) site is built by glycine 45 and glycine 47. The active site involves histidine 63. Residue aspartate 64 coordinates Ca(2+). 3 disulfides stabilise this stretch: cysteine 65/cysteine 139, cysteine 73/cysteine 97, and cysteine 91/cysteine 102.

Belongs to the phospholipase A2 family. Group II subfamily. D49 sub-subfamily. Requires Ca(2+) as cofactor. As to expression, expressed by the venom gland.

The protein localises to the secreted. It carries out the reaction a 1,2-diacyl-sn-glycero-3-phosphocholine + H2O = a 1-acyl-sn-glycero-3-phosphocholine + a fatty acid + H(+). Functionally, PLA2 catalyzes the calcium-dependent hydrolysis of the 2-acyl groups in 3-sn-phosphoglycerides. This is Acidic phospholipase A2 BpPLA2-TXI from Bothrops pauloensis (Neuwied's lancehead).